A 328-amino-acid chain; its full sequence is 2,3-diketo-L-gulonate-binding periplasmic protein YiaO (328 aa).

A signal peptide spans 1–24 (MKLRSVTYALFIAGLAAFSTSSLA).

As to quaternary structure, the complex comprises the extracytoplasmic solute receptor protein YiaO, and the two transmembrane proteins YiaM and YiaN.

It is found in the periplasm. Part of the tripartite ATP-independent periplasmic (TRAP) transport system YiaMNO involved in the uptake of 2,3-diketo-L-gulonate. This protein specifically binds 2,3-diketo-L-gulonate. Is not able to bind either L-ascorbate or dehydroascorbate. The protein is 2,3-diketo-L-gulonate-binding periplasmic protein YiaO (yiaO) of Escherichia coli (strain K12).